The following is a 142-amino-acid chain: Glia maturation factor beta (142 aa).

At Ser2 the chain carries N-acetylserine. One can recognise an ADF-H domain in the interval 4 to 139 (SLVVCDVAED…TEEWLREKLG (136 aa)).

The protein belongs to the actin-binding proteins ADF family. GMF subfamily. In terms of processing, phosphorylated; stimulated by phorbol ester.

This protein causes differentiation of brain cells, stimulation of neural regeneration, and inhibition of proliferation of tumor cells. This is Glia maturation factor beta (Gmfb) from Rattus norvegicus (Rat).